A 449-amino-acid chain; its full sequence is Trigger factor (449 aa).

The 86-residue stretch at 172–257 (GDEVRFDFKG…IKEITNVKPQ (86 aa)) folds into the PPIase FKBP-type domain.

Belongs to the FKBP-type PPIase family. Tig subfamily.

Its subcellular location is the cytoplasm. The catalysed reaction is [protein]-peptidylproline (omega=180) = [protein]-peptidylproline (omega=0). Involved in protein export. Acts as a chaperone by maintaining the newly synthesized protein in an open conformation. Functions as a peptidyl-prolyl cis-trans isomerase. The chain is Trigger factor from Ureaplasma parvum serovar 3 (strain ATCC 27815 / 27 / NCTC 11736).